The sequence spans 235 residues: Non-structural maintenance of chromosomes element 1 homolog (235 aa).

The RING-type; atypical zinc finger occupies 181 to 225 (IKNCTLCKCLVLWDIRCGSCNIQYHRGCIQTYLQRRDICPSCGNL). The residue at position 185 (Thr185) is a Phosphothreonine.

Belongs to the NSE1 family. In terms of assembly, component of the Smc5-Smc6 complex which consists at least of Smc5, Smc6, Nse1, Nse2, Nse4 and MAGE. Nse1, Nse4 and MAGE probably form a subcomplex that bridges the head domains of the Smc5-Smc6 heterodimer. Interacts with MAGE and Nse4.

It is found in the nucleus. It catalyses the reaction S-ubiquitinyl-[E2 ubiquitin-conjugating enzyme]-L-cysteine + [acceptor protein]-L-lysine = [E2 ubiquitin-conjugating enzyme]-L-cysteine + N(6)-ubiquitinyl-[acceptor protein]-L-lysine.. Component of the SMC5-SMC6 complex, a complex involved in repair of DNA double-strand breaks by homologous recombination. The complex may promote sister chromatid homologous recombination by recruiting the SMC1-SMC3 cohesin complex to double-strand breaks. This is Non-structural maintenance of chromosomes element 1 homolog from Drosophila melanogaster (Fruit fly).